The primary structure comprises 233 residues: Lipoprotein-releasing system ATP-binding protein LolD (233 aa).

Residues 6–233 (LQCDNLCKRY…TAELSLMGAE (228 aa)) enclose the ABC transporter domain. 42–49 (GSSGSGKS) contacts ATP.

This sequence belongs to the ABC transporter superfamily. Lipoprotein translocase (TC 3.A.1.125) family. The complex is composed of two ATP-binding proteins (LolD) and two transmembrane proteins (LolC and LolE).

Its subcellular location is the cell inner membrane. Functionally, part of the ABC transporter complex LolCDE involved in the translocation of mature outer membrane-directed lipoproteins, from the inner membrane to the periplasmic chaperone, LolA. Responsible for the formation of the LolA-lipoprotein complex in an ATP-dependent manner. The sequence is that of Lipoprotein-releasing system ATP-binding protein LolD from Salmonella paratyphi A (strain ATCC 9150 / SARB42).